The primary structure comprises 316 residues: Pantothenate kinase (316 aa).

Gly95–Ser102 contacts ATP.

This sequence belongs to the prokaryotic pantothenate kinase family.

The protein localises to the cytoplasm. The enzyme catalyses (R)-pantothenate + ATP = (R)-4'-phosphopantothenate + ADP + H(+). The protein operates within cofactor biosynthesis; coenzyme A biosynthesis; CoA from (R)-pantothenate: step 1/5. The protein is Pantothenate kinase (coaA) of Halalkalibacterium halodurans (strain ATCC BAA-125 / DSM 18197 / FERM 7344 / JCM 9153 / C-125) (Bacillus halodurans).